Reading from the N-terminus, the 725-residue chain is Homeobox protein unc-62 (725 aa).

Residues 133–218 (SSDVCSSASF…PLDIVGDERA (86 aa)) form the MEIS N-terminal domain. Disordered stretches follow at residues 214–258 (GDER…PYEP), 295–317 (SSSS…LHST), 329–359 (VSSP…GNSM), 386–419 (SLHQ…PPPQ), 491–555 (VKME…KRKV), and 615–661 (IDQN…PDPT). Residues 219-239 (SSSQPPMSPGSMGHHGHSGSP) are compositionally biased toward low complexity. The segment covering 388–400 (HQHHLHHPHHFPH) has biased composition (basic residues). Residues 498–508 (SVSSSKSGGKK) show a composition bias toward low complexity. Residues 541–550 (LSDSANGSQN) are compositionally biased toward polar residues. The segment at residues 552–614 (KRKVPKVFSK…NARRRIVQPM (63 aa)) is a DNA-binding region (homeobox; TALE-type).

Belongs to the TALE/MEIS homeobox family.

It localises to the nucleus. Functionally, acts redundantly with ceh-20 and ceh-40 to perform overlapping roles during embryogenesis. Required for postembryonic development of the ectoderm, including the Q, V and P cell lineages, playing a crucial role in ensuring that these cells and their descendants undergo their invariant patterns of cell division, migration, fusion and morphogenesis. Has a role in the mig-13 pathway to promote anterior migration of neuroblasts in the Q lineage. Required for multiple roles in regulating vulva development. The sequence is that of Homeobox protein unc-62 (unc-62) from Caenorhabditis briggsae.